Reading from the N-terminus, the 172-residue chain is Large ribosomal subunit protein uL10 (172 aa).

This sequence belongs to the universal ribosomal protein uL10 family. Part of the ribosomal stalk of the 50S ribosomal subunit. The N-terminus interacts with L11 and the large rRNA to form the base of the stalk. The C-terminus forms an elongated spine to which L12 dimers bind in a sequential fashion forming a multimeric L10(L12)X complex.

Forms part of the ribosomal stalk, playing a central role in the interaction of the ribosome with GTP-bound translation factors. The polypeptide is Large ribosomal subunit protein uL10 (Leifsonia xyli subsp. xyli (strain CTCB07)).